Here is a 158-residue protein sequence, read N- to C-terminus: 2-C-methyl-D-erythritol 2,4-cyclodiphosphate synthase (158 aa).

Residues Asp9 and His11 each coordinate a divalent metal cation. Residues 9 to 11 (DVH) and 35 to 36 (HS) each bind 4-CDP-2-C-methyl-D-erythritol 2-phosphate. A divalent metal cation is bound at residue His43. Residues 57–59 (DIG), 62–66 (FPDTD), 133–136 (TTTE), Phe140, and Arg143 each bind 4-CDP-2-C-methyl-D-erythritol 2-phosphate.

The protein belongs to the IspF family. As to quaternary structure, homotrimer. A divalent metal cation serves as cofactor.

It carries out the reaction 4-CDP-2-C-methyl-D-erythritol 2-phosphate = 2-C-methyl-D-erythritol 2,4-cyclic diphosphate + CMP. It functions in the pathway isoprenoid biosynthesis; isopentenyl diphosphate biosynthesis via DXP pathway; isopentenyl diphosphate from 1-deoxy-D-xylulose 5-phosphate: step 4/6. Involved in the biosynthesis of isopentenyl diphosphate (IPP) and dimethylallyl diphosphate (DMAPP), two major building blocks of isoprenoid compounds. Catalyzes the conversion of 4-diphosphocytidyl-2-C-methyl-D-erythritol 2-phosphate (CDP-ME2P) to 2-C-methyl-D-erythritol 2,4-cyclodiphosphate (ME-CPP) with a corresponding release of cytidine 5-monophosphate (CMP). The protein is 2-C-methyl-D-erythritol 2,4-cyclodiphosphate synthase of Haemophilus influenzae (strain PittGG).